The sequence spans 457 residues: Karyogamy meiotic segregation protein 2 (457 aa).

Ser-134 is modified (phosphoserine).

As to quaternary structure, interacts with sad1.

Its subcellular location is the cytoplasm. The protein resides in the cytoskeleton. The protein localises to the microtubule organizing center. It is found in the spindle pole body. This Schizosaccharomyces pombe (strain 972 / ATCC 24843) (Fission yeast) protein is Karyogamy meiotic segregation protein 2 (kms2).